The following is a 451-amino-acid chain: UDP-N-acetylmuramate--L-alanine ligase (451 aa).

Position 110–116 (110–116) interacts with ATP; the sequence is GTHGKTT.

The protein belongs to the MurCDEF family.

It localises to the cytoplasm. It carries out the reaction UDP-N-acetyl-alpha-D-muramate + L-alanine + ATP = UDP-N-acetyl-alpha-D-muramoyl-L-alanine + ADP + phosphate + H(+). It functions in the pathway cell wall biogenesis; peptidoglycan biosynthesis. Functionally, cell wall formation. This chain is UDP-N-acetylmuramate--L-alanine ligase, found in Francisella tularensis subsp. mediasiatica (strain FSC147).